The primary structure comprises 351 residues: Dihydroorotate dehydrogenase (quinone) (351 aa).

Residues 61–65 (AGLDK) and threonine 85 contribute to the FMN site. Lysine 65 is a binding site for substrate. 110 to 114 (NRMGF) contacts substrate. FMN contacts are provided by asparagine 139 and asparagine 172. A substrate-binding site is contributed by asparagine 172. The active-site Nucleophile is the serine 175. Substrate is bound at residue asparagine 177. Positions 217 and 245 each coordinate FMN. 246 to 247 (NT) lines the substrate pocket. Residues glycine 268, glycine 297, and 318 to 319 (YS) each bind FMN.

The protein belongs to the dihydroorotate dehydrogenase family. Type 2 subfamily. In terms of assembly, monomer. Requires FMN as cofactor.

It is found in the cell membrane. The catalysed reaction is (S)-dihydroorotate + a quinone = orotate + a quinol. The protein operates within pyrimidine metabolism; UMP biosynthesis via de novo pathway; orotate from (S)-dihydroorotate (quinone route): step 1/1. Functionally, catalyzes the conversion of dihydroorotate to orotate with quinone as electron acceptor. This Xanthomonas campestris pv. campestris (strain 8004) protein is Dihydroorotate dehydrogenase (quinone).